Reading from the N-terminus, the 121-residue chain is Heme-degrading monooxygenase (121 aa).

Positions 2–101 constitute an ABM domain; it reads IIVTNTIKVE…EQREDRKGIV (100 aa). Asparagine 6 lines the Fe cation pocket. The disordered stretch occupies residues 76–98; sequence KSDSFKKAHGRTKDTREQREDRK. Positions 78–98 are enriched in basic and acidic residues; it reads DSFKKAHGRTKDTREQREDRK. Residue histidine 84 coordinates heme.

The protein belongs to the antibiotic biosynthesis monooxygenase family. Heme-degrading monooxygenase IsdG subfamily. As to quaternary structure, homodimer.

It localises to the cytoplasm. It catalyses the reaction heme b + 3 reduced [NADPH--hemoprotein reductase] + 3 O2 = biliverdin IXalpha + CO + Fe(2+) + 3 oxidized [NADPH--hemoprotein reductase] + 3 H2O + H(+). Functionally, allows bacterial pathogens to use the host heme as an iron source. Catalyzes the oxidative degradation of the heme macrocyclic porphyrin ring to the biliverdin in the presence of a suitable electron donor such as ascorbate or NADPH--cytochrome P450 reductase, with subsequent release of free iron. The chain is Heme-degrading monooxygenase from Listeria innocua serovar 6a (strain ATCC BAA-680 / CLIP 11262).